Consider the following 174-residue polypeptide: Probable E3 ubiquitin-protein ligase RHA4A (174 aa).

Residues 105-147 (CCVCLGEFELKEELVEMPLCKHIFHLDCIHLWLYSHNTCPLCR) form an RING-type; atypical zinc finger. The segment at 155-174 (TKTSVDDDNDHPDSPQTSPV) is disordered.

In terms of tissue distribution, expressed in stems, flowers, cauline leaves and roots.

The enzyme catalyses S-ubiquitinyl-[E2 ubiquitin-conjugating enzyme]-L-cysteine + [acceptor protein]-L-lysine = [E2 ubiquitin-conjugating enzyme]-L-cysteine + N(6)-ubiquitinyl-[acceptor protein]-L-lysine.. It functions in the pathway protein modification; protein ubiquitination. Functionally, probable E3 ubiquitin-protein ligase that may possess E3 ubiquitin ligase activity in vitro. The polypeptide is Probable E3 ubiquitin-protein ligase RHA4A (Arabidopsis thaliana (Mouse-ear cress)).